A 404-amino-acid chain; its full sequence is Probable tRNA sulfurtransferase (404 aa).

In terms of domain architecture, THUMP spans 60 to 165 (QPVAESLKQI…EEAAYISYET (106 aa)). ATP contacts are provided by residues 183-184 (ML), 208-209 (HF), R265, G287, and Q296.

It belongs to the ThiI family.

The protein localises to the cytoplasm. It catalyses the reaction [ThiI sulfur-carrier protein]-S-sulfanyl-L-cysteine + a uridine in tRNA + 2 reduced [2Fe-2S]-[ferredoxin] + ATP + H(+) = [ThiI sulfur-carrier protein]-L-cysteine + a 4-thiouridine in tRNA + 2 oxidized [2Fe-2S]-[ferredoxin] + AMP + diphosphate. It carries out the reaction [ThiS sulfur-carrier protein]-C-terminal Gly-Gly-AMP + S-sulfanyl-L-cysteinyl-[cysteine desulfurase] + AH2 = [ThiS sulfur-carrier protein]-C-terminal-Gly-aminoethanethioate + L-cysteinyl-[cysteine desulfurase] + A + AMP + 2 H(+). Its pathway is cofactor biosynthesis; thiamine diphosphate biosynthesis. Functionally, catalyzes the ATP-dependent transfer of a sulfur to tRNA to produce 4-thiouridine in position 8 of tRNAs, which functions as a near-UV photosensor. Also catalyzes the transfer of sulfur to the sulfur carrier protein ThiS, forming ThiS-thiocarboxylate. This is a step in the synthesis of thiazole, in the thiamine biosynthesis pathway. The sulfur is donated as persulfide by IscS. In Streptococcus gordonii (strain Challis / ATCC 35105 / BCRC 15272 / CH1 / DL1 / V288), this protein is Probable tRNA sulfurtransferase.